The primary structure comprises 658 residues: UvrABC system protein B (658 aa).

Residues 25–178 (KSLKNKNHYQ…KSFLLKLVEM (154 aa)) form the Helicase ATP-binding domain. Position 38–45 (38–45 (GVTGSGKT)) interacts with ATP. A Beta-hairpin motif is present at residues 91–114 (HFDYYQPESYIPRRDLFIEKDSSI). The Helicase C-terminal domain occupies 433–607 (QVQDLFDEIK…ELKLRDDETK (175 aa)). One can recognise a UVR domain in the interval 623–658 (EKIIKELDKKMRECAKNLDFEEAMHLRDEIAKLRTL).

This sequence belongs to the UvrB family. Forms a heterotetramer with UvrA during the search for lesions. Interacts with UvrC in an incision complex.

The protein resides in the cytoplasm. The UvrABC repair system catalyzes the recognition and processing of DNA lesions. A damage recognition complex composed of 2 UvrA and 2 UvrB subunits scans DNA for abnormalities. Upon binding of the UvrA(2)B(2) complex to a putative damaged site, the DNA wraps around one UvrB monomer. DNA wrap is dependent on ATP binding by UvrB and probably causes local melting of the DNA helix, facilitating insertion of UvrB beta-hairpin between the DNA strands. Then UvrB probes one DNA strand for the presence of a lesion. If a lesion is found the UvrA subunits dissociate and the UvrB-DNA preincision complex is formed. This complex is subsequently bound by UvrC and the second UvrB is released. If no lesion is found, the DNA wraps around the other UvrB subunit that will check the other stand for damage. This Helicobacter acinonychis (strain Sheeba) protein is UvrABC system protein B.